The following is a 487-amino-acid chain: Recombining binding protein suppressor of hairless (487 aa).

2 DNA-binding regions span residues 44-54 (QKSYGNEKRFF) and 152-157 (SKPSKK). N6-acetyllysine is present on lysine 162. Residues 179 to 184 (RLRSQT) are DNA-binding. In terms of domain architecture, IPT/TIG spans 342-432 (PVVESLQLNG…YSTSLTFTYT (91 aa)). The segment covering 452–468 (SSQVPPNESNTNSEGSY) has biased composition (polar residues). The segment at 452-487 (SSQVPPNESNTNSEGSYTNVSTNSTSVTSSTATVVS) is disordered. Residues 469–487 (TNVSTNSTSVTSSTATVVS) show a composition bias toward low complexity.

The protein belongs to the Su(H) family. In terms of assembly, interacts with activated NOTCH1, NOTCH2 or NOTCH3. Interacts with MINT/SHARP. This interaction may mediate the recruitment of large corepressor complexes containing proteins such as HDAC1, HDAC2, NCOR2, SAP30, FHL1/KYOT2 and CIR1. Interacts with EP300, MAML1 and PTF1A. Interacts with RITA1, leading to nuclear export, prevent the interaction between RBPJ and NICD product and subsequent down-regulation of the Notch signaling pathway. Interacts with SNW1. Interacts with CHCHD2 and CXXC5. Interacts with BEND6 (via BEN domain). Interacts with NKAPL. Interacts with ZMIZ1. Interacts with RBM15. Interacts with L3MBTL3 and KDM1A; the interaction with KDM1A is weaker in the absence of L3MBTL3 and the interaction with L3MBTL3 is impaired by Notch-derived peptides containing the intracellular domain (NICD).

It localises to the nucleus. The protein resides in the cytoplasm. Transcriptional regulator that plays a central role in Notch signaling, a signaling pathway involved in cell-cell communication that regulates a broad spectrum of cell-fate determinations. Acts as a transcriptional repressor when it is not associated with Notch proteins. When associated with some NICD product of Notch proteins (Notch intracellular domain), it acts as a transcriptional activator that activates transcription of Notch target genes. Probably represses or activates transcription via the recruitment of chromatin remodeling complexes containing histone deacetylase or histone acetylase proteins, respectively. Specifically binds to the immunoglobulin kappa-type J segment recombination signal sequence. Binds specifically to methylated DNA. Binds to the oxygen responsive element of COX4I2 and activates its transcription under hypoxia conditions (4% oxygen). Negatively regulates the phagocyte oxidative burst in response to bacterial infection by repressing transcription of NADPH oxidase subunits. This Bos taurus (Bovine) protein is Recombining binding protein suppressor of hairless (RBPJ).